Consider the following 383-residue polypeptide: tRNA (guanine(26)-N(2))-dimethyltransferase (383 aa).

Residues 4 to 371 form the Trm1 methyltransferase domain; the sequence is EIITEGRTPL…ASPEEFEAVL (368 aa). S-adenosyl-L-methionine contacts are provided by Arg38, Arg63, Asp80, Asp108, and Ala109. Positions 243, 246, 258, and 261 each coordinate Zn(2+).

This sequence belongs to the class I-like SAM-binding methyltransferase superfamily. Trm1 family.

The enzyme catalyses guanosine(26) in tRNA + 2 S-adenosyl-L-methionine = N(2)-dimethylguanosine(26) in tRNA + 2 S-adenosyl-L-homocysteine + 2 H(+). Its function is as follows. Dimethylates a single guanine residue at position 26 of a number of tRNAs using S-adenosyl-L-methionine as donor of the methyl groups. The chain is tRNA (guanine(26)-N(2))-dimethyltransferase from Methanopyrus kandleri (strain AV19 / DSM 6324 / JCM 9639 / NBRC 100938).